The primary structure comprises 638 residues: Threonine--tRNA ligase (638 aa).

The region spanning 1-61 (MPVITLPDGS…SVDGKLQIIT (61 aa)) is the TGS domain. Residues 243 to 534 (DHRKIGKTQD…LTEEYAGFFP (292 aa)) form a catalytic region. Positions 334, 385, and 511 each coordinate Zn(2+).

Belongs to the class-II aminoacyl-tRNA synthetase family. Homodimer. Requires Zn(2+) as cofactor.

It is found in the cytoplasm. It catalyses the reaction tRNA(Thr) + L-threonine + ATP = L-threonyl-tRNA(Thr) + AMP + diphosphate + H(+). Catalyzes the attachment of threonine to tRNA(Thr) in a two-step reaction: L-threonine is first activated by ATP to form Thr-AMP and then transferred to the acceptor end of tRNA(Thr). Also edits incorrectly charged L-seryl-tRNA(Thr). This chain is Threonine--tRNA ligase, found in Hamiltonella defensa subsp. Acyrthosiphon pisum (strain 5AT).